We begin with the raw amino-acid sequence, 612 residues long: MSNSHPLRPFTAVGEIDHVHILSEHIGALLIGEEYGDVTFVVEKKHFPAHRVILAARCQYFRALLYGGMRESQPEAEIPLQDTTAEAFTMLLRYIYTGRATLTDEKEEVLLDFLSLAHKYGFPELEDSTSEYLCTILNIQNVCMTFDVASLYSLPKLTCMCCMFMDRNAQEVLASDGFLSLSKTALLNIVLRDSFAAPEKDIFLALLNWCKHNAKENHAEIMQAVRLPLMSLTELLNVVRPSGLLSPDAILDAIKVRSESRDMDLNYRGMLIPEENIATMKYGAQVVKGELKSALLDGDTQNYDLDHGFSRHPIDDDCRSGIEIKLGQPSIINHIRLLLWDRDSRSYSYFIEVSMDELDWIRVIDHSHYLCRSWQKLYFPARVCRYIRIVGTHNTVNKIFHIVAFECMFTNKAFTLEKGLIVPLENVATIADCASVIEGVSRSRNALLNGDTKNYDWDSGYTCHQLGSGAIVVQLAQPYIIGSIRLLLWDCDDRSYSYYVEVSTNQQQWTMVADRTKVSCKSWQSVTFERQPASFIRIVGTHNTANEVFHCVHFECPEQQSNQKEDSSEEPGTGDPSTPNQQLDPHAPRAPSASSLPPSPGPNSRSPNQQNQ.

The 69-residue stretch at 36 to 104 folds into the BTB domain; it reads GDVTFVVEKK…IYTGRATLTD (69 aa). The BACK domain occupies 142–240; it reads VCMTFDVASL…SLTELLNVVR (99 aa). The disordered stretch occupies residues 559–612; it reads QQSNQKEDSSEEPGTGDPSTPNQQLDPHAPRAPSASSLPPSPGPNSRSPNQQNQ. Over residues 589 to 612 the composition is skewed to low complexity; that stretch reads RAPSASSLPPSPGPNSRSPNQQNQ.

As to expression, expressed in the brain (at protein level).

The chain is BTB/POZ domain-containing protein 9 (Btbd9) from Mus musculus (Mouse).